Here is a 190-residue protein sequence, read N- to C-terminus: Large ribosomal subunit protein bL9 (190 aa).

The protein belongs to the bacterial ribosomal protein bL9 family.

Functionally, binds to the 23S rRNA. The protein is Large ribosomal subunit protein bL9 of Rhodobacter capsulatus (strain ATCC BAA-309 / NBRC 16581 / SB1003).